Here is a 1481-residue protein sequence, read N- to C-terminus: ABC-type transporter braE (1481 aa).

6 consecutive transmembrane segments (helical) span residues 27–47 (FTVK…FILA), 86–106 (LILI…SSAL), 130–150 (IFLS…ARTY), 159–179 (EIAF…MLLL), 269–289 (LYVP…SFFC), and 308–328 (PANI…VIAI). Residues 281-549 (LAAIGSFFCQ…LLETLPQMAA (269 aa)) form the ABC transmembrane type-1 1 domain. A glycan (N-linked (GlcNAc...) asparagine) is linked at asparagine 367. 3 helical membrane-spanning segments follow: residues 389–409 (ELWG…NLLG), 410–430 (VAFI…SFFM), and 491–511 (LMLT…PITF). An ABC transporter 1 domain is found at 594–823 (VAIKDGSFGW…QSYIHSLGVK (230 aa)). 627–634 (GPIASGKS) is a binding site for ATP. N-linked (GlcNAc...) asparagine glycosylation is found at asparagine 671 and asparagine 813. 6 helical membrane passes run 887–907 (IAIF…TIWL), 928–948 (AIYA…GVLL), 1001–1021 (SALL…AVIA), 1026–1046 (YLAI…KFYL), 1111–1131 (LHFV…SLAV), and 1144–1164 (LVTL…YTAL). An ABC transmembrane type-1 2 domain is found at 887–1166 (IAIFTSGLLY…VVIYYTALET (280 aa)). N-linked (GlcNAc...) asparagine glycans are attached at residues asparagine 1207 and asparagine 1232. Residues 1224-1477 (LTTNELSSND…PGTRFGELWS (254 aa)) form the ABC transporter 2 domain. Residue 1260-1267 (GRTGSGKS) participates in ATP binding. N-linked (GlcNAc...) asparagine glycans are attached at residues asparagine 1330 and asparagine 1364.

The protein belongs to the ABC transporter superfamily. ABCC family. Conjugate transporter (TC 3.A.1.208) subfamily.

It is found in the membrane. Functionally, ABC-type transporter; part of the gene cluster that mediates the biosynthesis of the brasilane terpene glycosides brasilane D and E. This is ABC-type transporter braE from Annulohypoxylon truncatum (Hypoxylon truncatum).